The sequence spans 460 residues: ESX-1 secretion-associated protein EspB (460 aa).

Disordered stretches follow at residues 92–116 (LDNDGEGTVQAESAGAVGGDSSAEL), 303–335 (PSDGSGVTPGTGMPAAPMVPPTGSPGGGLPADT), and 405–441 (LGGGGMGMPMGAAHQGQGGAKSKGSQQEDEALYTEDR).

In terms of processing, cleaved in the C-terminal region by MycP1.

The protein resides in the secreted. This Mycobacterium tuberculosis (strain CDC 1551 / Oshkosh) protein is ESX-1 secretion-associated protein EspB.